Reading from the N-terminus, the 665-residue chain is Target of rapamycin complex 2 subunit sin1 (665 aa).

Serine 62 is modified (phosphoserine). Composition is skewed to polar residues over residues 65 to 83 (IVANDTVSNVRKPSDTKQV) and 100 to 109 (YATSDLSESS). The interval 65-112 (IVANDTVSNVRKPSDTKQVNGAGGQVNHSRAEDSDYATSDLSESSDVG) is disordered. Serine 133 is modified (phosphoserine). The region spanning 255–392 (TSALRALLEH…ATPAQIKENQ (138 aa)) is the CRIM domain. Residues 395 to 433 (YPFKSKHPTSIPEANNKTHIRHTSSTSSQSQKQAQDVKD) are disordered. Residues serine 404, serine 490, serine 502, and serine 530 each carry the phosphoserine modification. Residues 517 to 537 (RDKKGSTQQLPTSSPQNSVYG) form a disordered region. Over residues 522 to 536 (STQQLPTSSPQNSVY) the composition is skewed to polar residues. Residues 558 to 659 (TYQEFLVWKR…IVSRIRALMN (102 aa)) enclose the SIN1-type PH domain.

This sequence belongs to the SIN1 family. In terms of assembly, the target of rapamycin complex 2 (TORC2) is composed of at least bit61, pop3/wat1, sin1, ste20 and tor1. Interacts with the sty1 MAP kinase. Phosphorylated; under environmental stress. Either Ser-61 or Ser-62 and Ser-298, Ser-299 or Ser-301 are phosphorylated as well.

Component of the mechanistic target of rapamycin complex 2 (mTORC2), which regulates multiple cellular processes to control cell growth in response to environmental signals. In response to signals, TORC2 phosphorylates AGC protein kinase family members, such as gad8. TORC2 is required for cell survival under various stress conditions. TORC2 positively controls G1 cell-cycle arrest, sexual development and amino acid uptake. Positively regulates amino acid uptake through the control of expression of amino acid permeases. Within the mTORC2 complex, sin1 acts as a substrate adapter which recognizes and binds AGC protein kinase family members for phosphorylation by tor1. The polypeptide is Target of rapamycin complex 2 subunit sin1 (Schizosaccharomyces pombe (strain 972 / ATCC 24843) (Fission yeast)).